Reading from the N-terminus, the 323-residue chain is Putative divalent cation/proton antiporter TMEM165 (323 aa).

Positions 1-33 (MAASARGSGRAPTRRLLVLLLLPLLWAPAGVRA) are cleaved as a signal peptide. Residues 34–88 (GPEEDLSHRNQEPPAPAQQLQPQPAAVQGLEPARAEKGFTPAAPVHTNREDAATQ) are Lumenal-facing. Positions 35 to 44 (PEEDLSHRNQ) are enriched in basic and acidic residues. The segment at 35-60 (PEEDLSHRNQEPPAPAQQLQPQPAAV) is disordered. Over residues 50 to 59 (AQQLQPQPAA) the composition is skewed to low complexity. Residues 89–109 (ANLGFIHAFVAAISVIIVSEL) traverse the membrane as a helical segment. Topologically, residues 110-126 (GDKTFFIAAIMAMRYNR) are cytoplasmic. A helical transmembrane segment spans residues 127–147 (LTVLAGAMLALALMTCLSVLF). The Lumenal segment spans residues 148-151 (GYAT). Residues 152 to 172 (TVIPRVYTYYVSTALFAIFGI) traverse the membrane as a helical segment. At 173–227 (RMLREGLKMSPDEGQEELEEVQAELKKKDEEFQRTKLLNGPDVETGTSTAIPQKK) the chain is on the cytoplasmic side. Residues 184-211 (DEGQEELEEVQAELKKKDEEFQRTKLLN) are a coiled coil. The helical transmembrane segment at 228-248 (WLHFISPIFVQALTLTFLAEW) threads the bilayer. The Lumenal portion of the chain corresponds to 249–266 (GDRSQLTTIVLAAREDPY). Residues 267 to 287 (GVAVGGTVGHCLCTGLAVIGG) traverse the membrane as a helical segment. At 288-298 (RMIAQKISVRT) the chain is on the cytoplasmic side. Residues 299 to 319 (VTIIGGIVFLAFAFSALFISP) form a helical membrane-spanning segment. At 320–323 (ESGF) the chain is on the lumenal side.

It belongs to the GDT1 family.

The protein resides in the golgi apparatus membrane. It carries out the reaction Ca(2+)(in) + n H(+)(out) = Ca(2+)(out) + n H(+)(in). The catalysed reaction is Mn(2+)(in) + n H(+)(out) = Mn(2+)(out) + n H(+)(in). Functionally, putative divalent cation:proton antiporter that exchanges calcium or manganese ions for protons across the Golgi membrane. Mediates the reversible transport of calcium or manganese to the Golgi lumen driven by the proton gradient and possibly the membrane potential generated by V-ATPase. Provides calcium or manganese cofactors to resident Golgi enzymes and contributes to the maintenance of an acidic luminal Golgi pH required for proper functioning of the secretory pathway. Promotes Ca(2+) storage within the Golgi lumen of the mammary epithelial cells to be then secreted into milk. The transport mechanism and stoichiometry remains to be elucidated. The protein is Putative divalent cation/proton antiporter TMEM165 of Rattus norvegicus (Rat).